A 925-amino-acid chain; its full sequence is Isoleucine--tRNA ligase (925 aa).

The 'HIGH' region signature appears at 57-67 (PYANGDIHMGH). Glu-556 contacts L-isoleucyl-5'-AMP. The short motif at 597-601 (KMSKS) is the 'KMSKS' region element. Position 600 (Lys-600) interacts with ATP. Zn(2+)-binding residues include Cys-890, Cys-893, Cys-910, and Cys-913.

The protein belongs to the class-I aminoacyl-tRNA synthetase family. IleS type 1 subfamily. Monomer. Zn(2+) is required as a cofactor.

The protein localises to the cytoplasm. It catalyses the reaction tRNA(Ile) + L-isoleucine + ATP = L-isoleucyl-tRNA(Ile) + AMP + diphosphate. In terms of biological role, catalyzes the attachment of isoleucine to tRNA(Ile). As IleRS can inadvertently accommodate and process structurally similar amino acids such as valine, to avoid such errors it has two additional distinct tRNA(Ile)-dependent editing activities. One activity is designated as 'pretransfer' editing and involves the hydrolysis of activated Val-AMP. The other activity is designated 'posttransfer' editing and involves deacylation of mischarged Val-tRNA(Ile). The chain is Isoleucine--tRNA ligase from Carboxydothermus hydrogenoformans (strain ATCC BAA-161 / DSM 6008 / Z-2901).